The following is a 249-amino-acid chain: MTLNVYFVLLSPYSLQSVPLPLTMQVIVPRRGDHVGCRNAGFGAHCGSNPQTPKLHQEHIKMVLQKTNWLRGVVAEGSFCYPKAARMPVLVWDDDLANLASLHTKGCVTETNKCRSTERFRSPGQSSYEISGDTLPSAMDILNFALRDWYLQKDNLTRKDIGSYPAGEDKGLKNMANLISDKVTAIGCGLTHWEEGKLKRALFTCNFSSSNVPGHPIYQRGDNFATKCAKTHPYYKSLCNSDEHIKPNK.

The first 23 residues, 1 to 23, serve as a signal peptide directing secretion; it reads MTLNVYFVLLSPYSLQSVPLPLT. The Cell attachment site signature appears at 31–33; that stretch reads RGD. Residues 64–207 form the SCP domain; sequence LQKTNWLRGV…LKRALFTCNF (144 aa). The Cell attachment site signature appears at 220-222; sequence RGD.

The protein belongs to the CRISP family. Expressed in salivary glands.

The protein localises to the secreted. In terms of biological role, inhibits platelet aggregation induced by all agonists tested (ADP, arachidonic acid, the thromboxane A2 analog U46619, thrombin, and snake venom snaclecs (TMVA that activates platelet through GPIB, and stejnulxin that specifically acts through GPVI (GP6))). May act by competing with fibrinogen for binding to glycoprotein IIb/IIIa (ITGA2B/ITGB3). This Tabanus yao (Horsefly) protein is Tabinhibitin 4.